Here is a 420-residue protein sequence, read N- to C-terminus: Putative phosphate permease HI_1604 (420 aa).

The next 12 membrane-spanning stretches (helical) occupy residues 8–28 (GSWL…GIGA), 49–69 (AIII…GEVT), 88–108 (ILAL…FIAT), 112–132 (WPVS…CITI), 145–165 (IVGS…AIFA), 185–205 (GPYY…KKGL), 216–236 (ETLI…HFYF), 250–270 (FGAV…AMAF), 300–320 (GGAL…VGLI), 343–363 (FAAQ…GLPI), 370–390 (VGAI…LTVI), and 393–413 (IISS…IIFY).

Belongs to the inorganic phosphate transporter (PiT) (TC 2.A.20) family.

The protein resides in the cell inner membrane. In terms of biological role, potential transporter for phosphate. In Haemophilus influenzae (strain ATCC 51907 / DSM 11121 / KW20 / Rd), this protein is Putative phosphate permease HI_1604.